The chain runs to 420 residues: Trichothecene biosynthesis transcription regulator TRI10 (420 aa).

It belongs to the TRI10 transcription regulator family.

The protein resides in the nucleus. Functionally, transcriptional activator of all of the trichothecene biosynthesis genes. Acts upstream of the cluster-encoded transcription factor TRI6 and is necessary for full expression of both the other trichothecene genes and the genes for the primary metabolic pathway that precedes the trichothecene biosynthetic pathway. The polypeptide is Trichothecene biosynthesis transcription regulator TRI10 (Fusarium sporotrichioides).